Here is a 581-residue protein sequence, read N- to C-terminus: Phosphoinositide phospholipase C 2 (581 aa).

An EF-hand-like domain is found at 26–102 (EIKTIFEKYS…NPPLALHKVH (77 aa)). Residues 103 to 248 (HDMDAPISHY…LKRRIIISTK (146 aa)) form the PI-PLC X-box domain. Catalysis depends on residues His118 and His164. Residues 279–314 (PSFIQRNKSEAKDDLDGNDDDDDDDDEDKSKINAPP) are disordered. Acidic residues predominate over residues 294–305 (DGNDDDDDDDDE). A PI-PLC Y-box domain is found at 317 to 433 (KHLIAIHAGK…GYIKKPDLLL (117 aa)). Residues 434-563 (KSGSDSDIFD…EGIRAFPLHS (130 aa)) form the C2 domain.

The cofactor is Ca(2+). In terms of processing, phosphorylation level varies significantly during early response to bacterial elicitor. Expressed in roots, shoots, leaves and flowers.

It localises to the cell membrane. It carries out the reaction a 1,2-diacyl-sn-glycero-3-phospho-(1D-myo-inositol-4,5-bisphosphate) + H2O = 1D-myo-inositol 1,4,5-trisphosphate + a 1,2-diacyl-sn-glycerol + H(+). Functionally, the production of the second messenger molecules diacylglycerol (DAG) and inositol 1,4,5-trisphosphate (IP3) is mediated by activated phosphatidylinositol-specific phospholipase C enzymes. At physiological calcium concentration, the preferred substrate is phosphatidylinositol 4,5-bisphosphate versus phosphatidylinositol. The sequence is that of Phosphoinositide phospholipase C 2 (PLC2) from Arabidopsis thaliana (Mouse-ear cress).